A 232-amino-acid polypeptide reads, in one-letter code: UPF0758 protein Amet_2289 (232 aa).

The 123-residue stretch at 110-232 (RIKSPDDVSN…YYSLKEKSMM (123 aa)) folds into the MPN domain. Residues histidine 181, histidine 183, and aspartate 194 each coordinate Zn(2+). The JAMM motif motif lies at 181–194 (HNHPSGDPSPSGED).

It belongs to the UPF0758 family.

The polypeptide is UPF0758 protein Amet_2289 (Alkaliphilus metalliredigens (strain QYMF)).